The sequence spans 870 residues: Phenylalanine--tRNA ligase beta subunit (870 aa).

One can recognise a tRNA-binding domain in the interval 39-148; the sequence is AADLQKFEVA…EDAVVGEPFT (110 aa). The region spanning 427–551 is the B5 domain; the sequence is PAKKTLDFPA…RIYGYDKIES (125 aa). The region spanning 450-498 is the RPE1 insert domain; the sequence is LLHNEANKGEFVGNTEHSIAAYKEVREDASTGLTPKLPLEASYVKGLNI. Residues aspartate 529, aspartate 535, glutamate 538, and glutamate 539 each coordinate Mg(2+). Residues 776-869 form the FDX-ACB domain; it reads SDYQANFRDY…IEQKFQGTLR (94 aa).

The protein belongs to the phenylalanyl-tRNA synthetase beta subunit family. Type 1 subfamily. In terms of assembly, tetramer of two alpha and two beta subunits. Requires Mg(2+) as cofactor.

The protein resides in the cytoplasm. The catalysed reaction is tRNA(Phe) + L-phenylalanine + ATP = L-phenylalanyl-tRNA(Phe) + AMP + diphosphate + H(+). The protein is Phenylalanine--tRNA ligase beta subunit (pheT) of Rickettsia bellii (strain RML369-C).